Reading from the N-terminus, the 279-residue chain is Shikimate dehydrogenase (NADP(+)) (279 aa).

Shikimate-binding positions include 20 to 22 (SRS) and Thr-67. Catalysis depends on Lys-71, which acts as the Proton acceptor. Asp-83 contacts NADP(+). Asn-92 and Asp-108 together coordinate shikimate. Residues 134 to 138 (GAGGA) and Leu-223 contribute to the NADP(+) site. Tyr-225 serves as a coordination point for shikimate. Gly-246 is an NADP(+) binding site.

It belongs to the shikimate dehydrogenase family. In terms of assembly, homodimer.

It catalyses the reaction shikimate + NADP(+) = 3-dehydroshikimate + NADPH + H(+). It functions in the pathway metabolic intermediate biosynthesis; chorismate biosynthesis; chorismate from D-erythrose 4-phosphate and phosphoenolpyruvate: step 4/7. Its function is as follows. Involved in the biosynthesis of the chorismate, which leads to the biosynthesis of aromatic amino acids. Catalyzes the reversible NADPH linked reduction of 3-dehydroshikimate (DHSA) to yield shikimate (SA). The chain is Shikimate dehydrogenase (NADP(+)) from Cereibacter sphaeroides (strain ATCC 17025 / ATH 2.4.3) (Rhodobacter sphaeroides).